We begin with the raw amino-acid sequence, 135 residues long: Small ribosomal subunit protein uS11 (135 aa).

Low complexity predominate over residues 1-11 (MPPKARAGAAV). The disordered stretch occupies residues 1-22 (MPPKARAGAAVKKVRRKERKNV).

It belongs to the universal ribosomal protein uS11 family. Part of the 30S ribosomal subunit. Interacts with proteins S7 and S18. Binds to IF-3.

Functionally, located on the platform of the 30S subunit, it bridges several disparate RNA helices of the 16S rRNA. Forms part of the Shine-Dalgarno cleft in the 70S ribosome. The protein is Small ribosomal subunit protein uS11 of Salinispora tropica (strain ATCC BAA-916 / DSM 44818 / JCM 13857 / NBRC 105044 / CNB-440).